A 353-amino-acid polypeptide reads, in one-letter code: Forkhead box protein I3-A (353 aa).

The fork-head DNA-binding region spans 116-210; the sequence is RPPYSYSALI…DNGNFRRKRK (95 aa). The interval 201 to 255 is disordered; it reads DNGNFRRKRKRKSDSLAEEEGKGYSGSDSALSSPKNPSDSSERGNSPISTDQAPC. The Nuclear localization signal signature appears at 206 to 212; that stretch reads RRKRKRK. Positions 213-222 are enriched in basic and acidic residues; it reads SDSLAEEEGK. A compositionally biased stretch (polar residues) spans 226-252; the sequence is GSDSALSSPKNPSDSSERGNSPISTDQ.

As to expression, expressed in ionocyte precursors.

The protein resides in the nucleus. Functionally, transcription factor required for epithelial cell differentiation. Involved in specification of skin ionocytes from epidermal precursors. The sequence is that of Forkhead box protein I3-A from Danio rerio (Zebrafish).